The primary structure comprises 381 residues: 3-dehydroquinate synthase (381 aa).

NAD(+)-binding positions include 81–86, 115–119, 139–140, Lys152, and Lys161; these read EGESSK, GVIGD, and TS. Zn(2+) contacts are provided by Glu194, His256, and His274.

The protein belongs to the sugar phosphate cyclases superfamily. Dehydroquinate synthase family. Requires Co(2+) as cofactor. It depends on Zn(2+) as a cofactor. NAD(+) serves as cofactor.

The protein resides in the cytoplasm. The enzyme catalyses 7-phospho-2-dehydro-3-deoxy-D-arabino-heptonate = 3-dehydroquinate + phosphate. It participates in metabolic intermediate biosynthesis; chorismate biosynthesis; chorismate from D-erythrose 4-phosphate and phosphoenolpyruvate: step 2/7. In terms of biological role, catalyzes the conversion of 3-deoxy-D-arabino-heptulosonate 7-phosphate (DAHP) to dehydroquinate (DHQ). This chain is 3-dehydroquinate synthase, found in Rhodopseudomonas palustris (strain TIE-1).